We begin with the raw amino-acid sequence, 170 residues long: Adenine phosphoribosyltransferase (170 aa).

This sequence belongs to the purine/pyrimidine phosphoribosyltransferase family. In terms of assembly, homodimer.

It localises to the cytoplasm. It catalyses the reaction AMP + diphosphate = 5-phospho-alpha-D-ribose 1-diphosphate + adenine. It functions in the pathway purine metabolism; AMP biosynthesis via salvage pathway; AMP from adenine: step 1/1. In terms of biological role, catalyzes a salvage reaction resulting in the formation of AMP, that is energically less costly than de novo synthesis. The polypeptide is Adenine phosphoribosyltransferase (Thermotoga petrophila (strain ATCC BAA-488 / DSM 13995 / JCM 10881 / RKU-1)).